The primary structure comprises 528 residues: Na(+)/H(+) antiporter NhaB (528 aa).

11 consecutive transmembrane segments (helical) span residues 29–49, 52–72, 95–115, 139–159, 203–223, 248–268, 304–324, 349–369, 390–410, 448–468, and 476–496; these read LIIN…LLVI, IFTL…LLAI, VLLL…LLLF, AFLS…AVAV, LLMH…VGEP, VPVF…KIFG, AFIG…VGLI, EEAL…AVII, LVIF…VFVG, ATPN…APLI, and VWMA…AIEL.

The protein belongs to the NhaB Na(+)/H(+) (TC 2.A.34) antiporter family.

It is found in the cell inner membrane. The enzyme catalyses 2 Na(+)(in) + 3 H(+)(out) = 2 Na(+)(out) + 3 H(+)(in). Na(+)/H(+) antiporter that extrudes sodium in exchange for external protons. This Shewanella woodyi (strain ATCC 51908 / MS32) protein is Na(+)/H(+) antiporter NhaB.